The primary structure comprises 134 residues: Profilin-3 (134 aa).

A disulfide bond links C13 and C118. The short motif at 84–100 (AVIRGKKGSGGITIKKT) is the Involved in PIP2 interaction element. A Phosphothreonine modification is found at T114.

The protein belongs to the profilin family. Occurs in many kinds of cells as a complex with monomeric actin in a 1:1 ratio. Post-translationally, phosphorylated by MAP kinases.

It is found in the cytoplasm. It localises to the cytoskeleton. Its function is as follows. Binds to actin and affects the structure of the cytoskeleton. At high concentrations, profilin prevents the polymerization of actin, whereas it enhances it at low concentrations. This Olea europaea (Common olive) protein is Profilin-3.